A 285-amino-acid polypeptide reads, in one-letter code: Bis(5'-nucleosyl)-tetraphosphatase, symmetrical (285 aa).

This sequence belongs to the Ap4A hydrolase family.

It catalyses the reaction P(1),P(4)-bis(5'-adenosyl) tetraphosphate + H2O = 2 ADP + 2 H(+). Its function is as follows. Hydrolyzes diadenosine 5',5'''-P1,P4-tetraphosphate to yield ADP. The chain is Bis(5'-nucleosyl)-tetraphosphatase, symmetrical from Pseudomonas entomophila (strain L48).